The primary structure comprises 212 residues: Probable chemoreceptor glutamine deamidase CheD (212 aa).

Belongs to the CheD family.

It catalyses the reaction L-glutaminyl-[protein] + H2O = L-glutamyl-[protein] + NH4(+). Probably deamidates glutamine residues to glutamate on methyl-accepting chemotaxis receptors (MCPs), playing an important role in chemotaxis. The chain is Probable chemoreceptor glutamine deamidase CheD from Bordetella parapertussis (strain 12822 / ATCC BAA-587 / NCTC 13253).